Consider the following 192-residue polypeptide: dTDP-3-amino-3,6-dideoxy-alpha-D-galactopyranose 3-N-acetyltransferase (192 aa).

The protein belongs to the transferase hexapeptide repeat family.

The catalysed reaction is dTDP-3-amino-3,6-dideoxy-alpha-D-galactopyranose + acetyl-CoA = dTDP-3-acetamido-3,6-dideoxy-alpha-D-galactopyranose + CoA + H(+). In terms of biological role, catalyzes the transfer of an acetyl group to dTDP-D-Fucp3N to form dTDP-D-Fucp3NAc in the biosynthesis of dTDP-3-acetamido-3,6-dideoxy-alpha-D-galactose, a glycan chain of the S-layer. This is dTDP-3-amino-3,6-dideoxy-alpha-D-galactopyranose 3-N-acetyltransferase (fdtC) from Aneurinibacillus thermoaerophilus.